A 276-amino-acid chain; its full sequence is Outer membrane lipoprotein 2 (276 aa).

Positions 1–19 (MNFKKLLGVALVSALALTA) are cleaved as a signal peptide. The N-palmitoyl cysteine moiety is linked to residue C20. C20 carries the S-diacylglycerol cysteine lipid modification.

Belongs to the NlpA lipoprotein family.

Its subcellular location is the cell outer membrane. This chain is Outer membrane lipoprotein 2 (plpB), found in Mannheimia haemolytica (Pasteurella haemolytica).